The following is a 104-amino-acid chain: L-rhamnose mutarotase (104 aa).

Substrate is bound at residue tyrosine 18. Residue histidine 22 is the Proton donor of the active site. Substrate-binding positions include tyrosine 41 and 76 to 77 (WW).

Belongs to the rhamnose mutarotase family. In terms of assembly, homodimer.

Its subcellular location is the cytoplasm. The enzyme catalyses alpha-L-rhamnose = beta-L-rhamnose. It participates in carbohydrate metabolism; L-rhamnose metabolism. Its function is as follows. Involved in the anomeric conversion of L-rhamnose. In Salmonella agona (strain SL483), this protein is L-rhamnose mutarotase.